Consider the following 337-residue polypeptide: ERI1 exoribonuclease 3 (337 aa).

The region spanning 146–320 is the Exonuclease domain; that stretch reads FLVLDFEATC…DDCKNIANIM (175 aa). The Mg(2+) site is built by D150, E152, and D249. E152 (proton acceptor) is an active-site residue. E152 serves as a coordination point for AMP. The active-site Proton acceptor is the H307. H307 is an AMP binding site. D312 contributes to the Mg(2+) binding site.

In terms of assembly, interacts with PRNP. It depends on Mg(2+) as a cofactor.

This is ERI1 exoribonuclease 3 (ERI3) from Homo sapiens (Human).